The chain runs to 281 residues: Nucleoid occlusion protein (281 aa).

The tract at residues 1–24 (MKHPFSRLFSFGEKEQEEMEEKQE) is disordered. Residues 145–164 (EALAQRLGKGQSTIANKLRL) constitute a DNA-binding region (H-T-H motif).

The protein belongs to the ParB family.

It localises to the cytoplasm. Its subcellular location is the nucleoid. Its function is as follows. Effects nucleoid occlusion by binding relatively nonspecifically to DNA and preventing the assembly of the division machinery in the vicinity of the nucleoid, especially under conditions that disturb the cell cycle. It helps to coordinate cell division and chromosome segregation by preventing the formation of the Z ring through the nucleoid, which would cause chromosome breakage. In Geobacillus kaustophilus (strain HTA426), this protein is Nucleoid occlusion protein.